The following is a 405-amino-acid chain: Dematin (405 aa).

3 disordered regions span residues 1–29 (MERL…SPSS), 81–100 (SREC…PEVW), and 108–332 (IISQ…DRGN). Positions 11–29 (SPGSVSSSRDSSVPGSPSS) are enriched in low complexity. Phosphoserine is present on residues Ser-16, Ser-18, Ser-26, Ser-92, Ser-96, Ser-110, and Ser-113. Residues 113-124 (STPRTTGTPRTS) show a composition bias toward low complexity. At Thr-114 the chain carries Phosphothreonine. Phosphoserine occurs at positions 156 and 226. Over residues 216–228 (EEEEEEEDDDSEE) the composition is skewed to acidic residues. Residues 224–308 (DDSEEEIKAI…SRLQSTEFSP (85 aa)) are interaction with RASGRF2. 2 stretches are compositionally biased toward basic and acidic residues: residues 229–242 (EIKA…EELS) and 252–261 (ILKEEMEKSL). Phosphoserine occurs at positions 269, 279, 289, 303, 315, 333, 372, and 383. Low complexity predominate over residues 277–292 (HTSLHSGTSKSSSLPS). Residues 294–322 (GRTTLSRLQSTEFSPSGSEAGSPGLQNGE) are compositionally biased toward polar residues. The 69-residue stretch at 337-405 (VLEQKIYPYE…NELKKKASLF (69 aa)) folds into the HP domain. The residue at position 403 (Ser-403) is a Phosphoserine; by PKA.

This sequence belongs to the villin/gelsolin family. In terms of assembly, monomeric (isoform 2); under reducing conditions. Self-associates. Exists under oxidizing condition as a trimer of two isoforms 2 and isoform 1 linked by disulfide bonds. Found in a complex with DMTN, F-actin and spectrin. Found in a complex with ADD2, DMTN and SLC2A1. Interacts with F-actin, ITPKB and spectrin. Isoform 2 interacts with SLC2A1 (via C-terminus cytoplasmic region). Interacts with RASGRF2. Post-translationally, phosphorylated. Phosphorylation at Ser-403 by PKA causes the C-terminal headpiece domain to associate with the N-terminal core domain, and leads to the inhibition of its actin bundling activity. Expressed in platelets. Isoform 1 and isoform 2 are expressed in mature erythrocytes (at protein level).

It is found in the cytoplasm. The protein resides in the cytosol. It localises to the perinuclear region. The protein localises to the cytoskeleton. Its subcellular location is the cell membrane. It is found in the membrane. The protein resides in the endomembrane system. It localises to the cell projection. In terms of biological role, membrane-cytoskeleton-associated protein with F-actin-binding activity that induces F-actin bundles formation and stabilization. Its F-actin-bundling activity is reversibly regulated upon its phosphorylation by the cAMP-dependent protein kinase A (PKA). Binds to the erythrocyte membrane glucose transporter-1 SLC2A1/GLUT1, and hence stabilizes and attaches the spectrin-actin network to the erythrocytic plasma membrane. Plays a role in maintaining the functional integrity of PKA-activated erythrocyte shape and the membrane mechanical properties. Also plays a role as a modulator of actin dynamics in fibroblasts; acts as a negative regulator of the RhoA activation pathway. In platelets, functions as a regulator of internal calcium mobilization across the dense tubular system that affects platelet granule secretion pathways and aggregation. Also required for the formation of a diverse set of cell protrusions, such as filopodia and lamellipodia, necessary for platelet cell spreading, motility and migration. Acts as a tumor suppressor and inhibits malignant cell transformation. The sequence is that of Dematin (Dmtn) from Mus musculus (Mouse).